The primary structure comprises 501 residues: Glycogen synthase 1 (501 aa).

K18 is an ADP-alpha-D-glucose binding site.

It belongs to the glycosyltransferase 1 family. Bacterial/plant glycogen synthase subfamily.

It catalyses the reaction [(1-&gt;4)-alpha-D-glucosyl](n) + ADP-alpha-D-glucose = [(1-&gt;4)-alpha-D-glucosyl](n+1) + ADP + H(+). The protein operates within glycan biosynthesis; glycogen biosynthesis. In terms of biological role, synthesizes alpha-1,4-glucan chains using ADP-glucose. This chain is Glycogen synthase 1, found in Geobacter sulfurreducens (strain ATCC 51573 / DSM 12127 / PCA).